The following is a 194-amino-acid chain: High mobility group protein B4 (194 aa).

2 DNA-binding regions (HMG box) span residues 9 to 79 (PKAN…MNYF) and 93 to 161 (PRRP…SVYR).

It belongs to the HMGB family.

The protein resides in the nucleus. Its subcellular location is the chromosome. The chain is High mobility group protein B4 (HMGB4) from Bos taurus (Bovine).